A 229-amino-acid chain; its full sequence is Ras-related protein Rab-33B (229 aa).

Residues asparagine 43, valine 44, glycine 45, lysine 46, threonine 47, cysteine 48, threonine 62, and threonine 65 each coordinate GTP. Mg(2+) is bound at residue threonine 47. The Switch 1 signature appears at 56–68; sequence GRFPDRTEATIGV. Residues threonine 65 and aspartate 88 each coordinate Mg(2+). The short motif at 89–108 is the Switch 2 element; it reads TAGQERFRKSMVQHYYRNVH. The GTP site is built by glycine 91, asparagine 148, lysine 149, aspartate 151, alanine 179, and lysine 180. Residues cysteine 227 and cysteine 229 are each lipidated (S-geranylgeranyl cysteine). Cysteine 229 is subject to Cysteine methyl ester.

Belongs to the small GTPase superfamily. Rab family. In terms of assembly, interacts (GTP- and GDP-bound forms) with ATG16L1; the complex consists of a tetramer where two RAB33B molecules bind independently one molecule of the ATG16L1 homodimer; the interaction promotes ATG12-ATG5-ATG16L1 complex recruitment to phagophores. Interacts with ATG16L2; however interaction is approximately hundred times lower than for ATG16L1. Interacts with RIC1 (via C-terminus domain); the interaction is direct with a preference for RAB33B-GTP. Interacts with RGP1. Mg(2+) is required as a cofactor. Prenylated.

It localises to the golgi apparatus membrane. The protein resides in the golgi apparatus. Its subcellular location is the cis-Golgi network. It is found in the preautophagosomal structure membrane. The catalysed reaction is GTP + H2O = GDP + phosphate + H(+). With respect to regulation, regulated by guanine nucleotide exchange factors (GEFs) which promote the exchange of bound GDP for free GTP. Regulated by GTPase activating proteins (GAPs) such as SGSM2 which increase the GTP hydrolysis activity. Inhibited by GDP dissociation inhibitors (GDIs). The small GTPases Rab are key regulators of intracellular membrane trafficking, from the formation of transport vesicles to their fusion with membranes. Rabs cycle between an inactive GDP-bound form and an active GTP-bound form that is able to recruit to membranes different sets of downstream effectors directly responsible for vesicle formation, movement, tethering and fusion. RAB33B acts, in coordination with RAB6A, to regulate intra-Golgi retrograde trafficking. Participates in autophagosome formation by recruiting the ATG12-ATG5-ATG16L1 complex to phagophores, probably in a nucleotide-independent manner. The protein is Ras-related protein Rab-33B (RAB33B) of Pongo abelii (Sumatran orangutan).